Reading from the N-terminus, the 157-residue chain is Transcriptional regulator AzlB (157 aa).

The HTH asnC-type domain occupies 5–66; sequence LDETDKAILR…IVDEKKLGIE (62 aa). Positions 24–43 form a DNA-binding region, H-T-H motif; that stretch reads NLNLSKKIGLSPSACLARTK.

In terms of biological role, transcriptional repressor of the azlBCD operon involved in branched-chain amino acid transport. This is Transcriptional regulator AzlB (azlB) from Bacillus subtilis (strain 168).